Consider the following 489-residue polypeptide: MTQDVEMKEVPAPAPSNSVTAATPSTLQHLKEIASLIESGAYAREVRRILRAVRLTIALRKKLNASVVNAFLNFSLVPGSEVHARLASYLPKEDEHDMEVDTAMSATTTLAKHSLPELEIYCYLLVLIFLIDQKKYSEAKACSSASIARVKNLNRRTVEVLASRLYFYYSLSYELTGDLAEIRGNLLALHRIATLRHDELGQETLLNLLLRNYLHYNLYDQAEKLRSKAPRFEAHSNQQFCRYLFYLGKIRTIQLEYTDAKESXLQAARKAPVAALGFRVQCNKWAVIVRLLLGEIPERTVFMQKGMEKALRPYFXLTNAVRIGDLELFRXVADKFASTFTADRTHNLIVRLRHNVIRTGLRNISISYSRISLVDVARKLRLDSPNPVADAESIVSKAIRDGAIDATIDHANGWMVSKETGDIYSTNEPQAAFNSRIAFCLNMHNEAVRALRFPANSHKDKESAEKRRERQQQEQELAKHIAEEDDDEF.

Positions 1–23 (MTQDVEMKEVPAPAPSNSVTAAT) are disordered. Residues 241 to 422 (CRYLFYLGKI…GWMVSKETGD (182 aa)) form the PCI domain. The tract at residues 454 to 489 (PANSHKDKESAEKRRERQQQEQELAKHIAEEDDDEF) is disordered. A compositionally biased stretch (basic and acidic residues) spans 457–482 (SHKDKESAEKRRERQQQEQELAKHIA).

Belongs to the proteasome subunit S3 family. The 26S proteasome is composed of a core protease, known as the 20S proteasome, capped at one or both ends by the 19S regulatory complex (RC). The RC is composed of at least 18 different subunits in two subcomplexes, the base and the lid, which form the portions proximal and distal to the 20S proteolytic core, respectively.

It is found in the nucleus. In terms of biological role, acts as a regulatory subunit of the 26 proteasome which is involved in the ATP-dependent degradation of ubiquitinated proteins. This Daucus carota (Wild carrot) protein is Probable 26S proteasome non-ATPase regulatory subunit 3 (21D7).